Consider the following 212-residue polypeptide: NADH dehydrogenase [ubiquinone] iron-sulfur protein 8, mitochondrial (212 aa).

A mitochondrion-targeting transit peptide spans 1–36 (MRCLTMPMLLRALAQAQAARAGHASVRGLHSSAVAA). 2 4Fe-4S ferredoxin-type domains span residues 104–133 (RRYP…IEAE) and 143–172 (TRYD…EGPN). Residues Cys113, Cys116, Cys119, Cys123, Cys152, Cys155, Cys158, and Cys162 each contribute to the [4Fe-4S] cluster site.

It belongs to the complex I 23 kDa subunit family. In terms of assembly, core subunit of respiratory chain NADH dehydrogenase (Complex I) which is composed of 45 different subunits. This is a component of the iron-sulfur (IP) fragment of the enzyme. Interacts with RAB5IF. The cofactor is [4Fe-4S] cluster.

It is found in the mitochondrion inner membrane. It catalyses the reaction a ubiquinone + NADH + 5 H(+)(in) = a ubiquinol + NAD(+) + 4 H(+)(out). Functionally, core subunit of the mitochondrial membrane respiratory chain NADH dehydrogenase (Complex I) which catalyzes electron transfer from NADH through the respiratory chain, using ubiquinone as an electron acceptor. Essential for the catalytic activity and assembly of complex I. In Bos taurus (Bovine), this protein is NADH dehydrogenase [ubiquinone] iron-sulfur protein 8, mitochondrial (NDUFS8).